Here is a 591-residue protein sequence, read N- to C-terminus: DDB1- and CUL4-associated factor 8 (591 aa).

The segment covering 1-14 (MSSKRPSTDGRRDL) has biased composition (basic and acidic residues). A disordered region spans residues 1 to 140 (MSSKRPSTDG…EDWVSSETTA (140 aa)). Residues serine 21 and serine 22 each carry the phosphoserine modification. A Nuclear export signal motif is present at residues 39–50 (IEVEASDLSLSL). Basic and acidic residues-rich tracts occupy residues 65-99 (RGTDTESSGEEKDSDSMEDTGHYSINDENRVHGHS) and 118-131 (SRDQDSSDDERALE). Serine 99, serine 123, and serine 124 each carry phosphoserine. WD repeat units lie at residues 185 to 224 (GHTGCVNTLHFNQRGTWLASGSDDLKVVVWDWVRRQPVLD), 228 to 269 (GHKS…CCKN), 275 to 315 (QHKG…PASK), 323 to 363 (EKKV…ENEN), 379 to 418 (ESKANITCLVYSHDGTELLASYNDEDIYLFNSSHSDGAQY), 426 to 466 (RNNA…IIQF), and 470 to 509 (DKGGVVNCLEPHPHLPVLATSGLDHDVKIWAPTAEASTEL). Position 198 is an omega-N-methylarginine; by PRMT1 (arginine 198). Residues 552–591 (HRRWREPGVGATDADSDESPSSSDTSDEEEGPDRVQCMPS) form a disordered region.

This sequence belongs to the WD repeat DCAF8 family. In terms of assembly, interacts with DDB1, CUL4A and CUL4B. Interacts with KPNA1, KPNB1 and XPO1.

The protein localises to the nucleus. It is found in the cytoplasm. It participates in protein modification; protein ubiquitination. Functionally, may function as a substrate receptor for CUL4-DDB1 E3 ubiquitin-protein ligase complex. In Rattus norvegicus (Rat), this protein is DDB1- and CUL4-associated factor 8 (Dcaf8).